The chain runs to 94 residues: Large ribosomal subunit protein eL42 (94 aa).

Positions 11, 14, 70, and 73 each coordinate Zn(2+). The C4-type zinc-finger motif lies at 11-73 (CPYCKKHTIH…IDLRFKCTEC (63 aa)).

Belongs to the eukaryotic ribosomal protein eL42 family. Part of the 50S ribosomal subunit. Requires Zn(2+) as cofactor.

Functionally, binds to the 23S rRNA. The chain is Large ribosomal subunit protein eL42 from Methanocaldococcus jannaschii (strain ATCC 43067 / DSM 2661 / JAL-1 / JCM 10045 / NBRC 100440) (Methanococcus jannaschii).